The sequence spans 265 residues: Energy-coupling factor transporter transmembrane protein EcfT (265 aa).

6 consecutive transmembrane segments (helical) span residues 26 to 46, 47 to 67, 72 to 92, 107 to 127, 152 to 172, and 243 to 263; these read MVFV…QTYA, VGII…MFLF, PILF…KGGA, VIMG…TTIM, LPVH…PTLM, and HTYD…ILYL.

Belongs to the energy-coupling factor EcfT family. In terms of assembly, forms a stable energy-coupling factor (ECF) transporter complex composed of 2 membrane-embedded substrate-binding proteins (S component), 2 ATP-binding proteins (A component) and 2 transmembrane proteins (T component). May be able to interact with more than 1 S component at a time.

The protein resides in the cell membrane. Its function is as follows. Transmembrane (T) component of an energy-coupling factor (ECF) ABC-transporter complex. Unlike classic ABC transporters this ECF transporter provides the energy necessary to transport a number of different substrates. This chain is Energy-coupling factor transporter transmembrane protein EcfT, found in Macrococcus caseolyticus (strain JCSC5402) (Macrococcoides caseolyticum).